A 332-amino-acid polypeptide reads, in one-letter code: Packaging enzyme P4 (332 aa).

Residues 111–138 are involved in the regulation and mechanisms of transcription, replication and genome packaging; the sequence is RWPSEGIYSGVTALMGATGSGKSITLNE. 126 to 133 is a binding site for ATP; that stretch reads GATGSGKS. Residues 310–332 are disordered; sequence LERGSVDTDDRNSAPRRGANFSL. A compositionally biased stretch (basic and acidic residues) spans 313-322; it reads GSVDTDDRNS.

In terms of assembly, homohexamer. Part of the packaging complex composed of RDRP, P4 and P7.

Its subcellular location is the virion. It carries out the reaction a ribonucleoside 5'-triphosphate + H2O = a ribonucleoside 5'-diphosphate + phosphate + H(+). Its function is as follows. Packaging motor with helicase and translocase activities. Part of the packaging complex that packages the viral RNA segments, replicate them into a double-stranded form and transcribe them. is one of the structural proteins of the polyhedral procapsid, which is responsible for genomic replication and transcription. Displays single-stranded RNA-stimulated NTPase activity. The protein is Packaging enzyme P4 (P4) of Pseudomonas savastanoi pv. phaseolicola (Pseudomonas syringae pv. phaseolicola).